The sequence spans 255 residues: Putative cysteine-rich repeat secretory protein 32 (255 aa).

Residues 1–28 (MYSSYSLFKCLVCFYILGIQVLIHSVSS) form the signal peptide. Gnk2-homologous domains lie at 35–136 (YLHH…TINS) and 143–252 (YENT…LYPF).

Belongs to the cysteine-rich repeat secretory protein family.

It localises to the secreted. This is Putative cysteine-rich repeat secretory protein 32 (CRRSP32) from Arabidopsis thaliana (Mouse-ear cress).